The chain runs to 536 residues: CTP synthase (536 aa).

Positions Met-1–Leu-267 are amidoligase domain. Ser-13 provides a ligand contact to CTP. Residue Ser-13 participates in UTP binding. Ser-14 to Ile-19 is an ATP binding site. Tyr-54 serves as a coordination point for L-glutamine. Asp-71 is an ATP binding site. Asp-71 and Glu-141 together coordinate Mg(2+). CTP-binding positions include Asp-148–Glu-150, Lys-188–Gln-193, and Lys-224. UTP-binding positions include Lys-188–Gln-193 and Lys-224. The Glutamine amidotransferase type-1 domain maps to Lys-292 to Ala-535. Residue Gly-354 participates in L-glutamine binding. Cys-381 functions as the Nucleophile; for glutamine hydrolysis in the catalytic mechanism. L-glutamine-binding positions include Leu-382–Gln-385, Glu-405, and Arg-463. Catalysis depends on residues His-508 and Glu-510.

The protein belongs to the CTP synthase family. As to quaternary structure, homotetramer.

It catalyses the reaction UTP + L-glutamine + ATP + H2O = CTP + L-glutamate + ADP + phosphate + 2 H(+). The enzyme catalyses L-glutamine + H2O = L-glutamate + NH4(+). The catalysed reaction is UTP + NH4(+) + ATP = CTP + ADP + phosphate + 2 H(+). It participates in pyrimidine metabolism; CTP biosynthesis via de novo pathway; CTP from UDP: step 2/2. With respect to regulation, allosterically activated by GTP, when glutamine is the substrate; GTP has no effect on the reaction when ammonia is the substrate. The allosteric effector GTP functions by stabilizing the protein conformation that binds the tetrahedral intermediate(s) formed during glutamine hydrolysis. Inhibited by the product CTP, via allosteric rather than competitive inhibition. In terms of biological role, catalyzes the ATP-dependent amination of UTP to CTP with either L-glutamine or ammonia as the source of nitrogen. Regulates intracellular CTP levels through interactions with the four ribonucleotide triphosphates. The protein is CTP synthase of Streptococcus mutans serotype c (strain ATCC 700610 / UA159).